Reading from the N-terminus, the 598-residue chain is Auxin response factor 22 (598 aa).

Residues 124 to 226 (NSFTKVLTAS…ELRVGIRRAG (103 aa)) constitute a DNA-binding region (TF-B3). In terms of domain architecture, PB1 spans 509 to 590 (RTCTKVQMQG…MVKKILIFKR (82 aa)).

It belongs to the ARF family. Homodimers and heterodimers.

The protein localises to the nucleus. In terms of biological role, auxin response factors (ARFs) are transcriptional factors that bind specifically to the DNA sequence 5'-TGTCTC-3' found in the auxin-responsive promoter elements (AuxREs). Could act as transcriptional activator or repressor. Formation of heterodimers with Aux/IAA proteins may alter their ability to modulate early auxin response genes expression. The protein is Auxin response factor 22 (ARF22) of Arabidopsis thaliana (Mouse-ear cress).